Reading from the N-terminus, the 391-residue chain is Tryptophan synthase beta chain 2 (391 aa).

K83 is modified (N6-(pyridoxal phosphate)lysine).

Belongs to the TrpB family. As to quaternary structure, tetramer of two alpha and two beta chains. It depends on pyridoxal 5'-phosphate as a cofactor.

It catalyses the reaction (1S,2R)-1-C-(indol-3-yl)glycerol 3-phosphate + L-serine = D-glyceraldehyde 3-phosphate + L-tryptophan + H2O. The protein operates within amino-acid biosynthesis; L-tryptophan biosynthesis; L-tryptophan from chorismate: step 5/5. Functionally, the beta subunit is responsible for the synthesis of L-tryptophan from indole and L-serine. This is Tryptophan synthase beta chain 2 (trpB2) from Chlamydia caviae (strain ATCC VR-813 / DSM 19441 / 03DC25 / GPIC) (Chlamydophila caviae).